Reading from the N-terminus, the 147-residue chain is Putative pre-16S rRNA nuclease (147 aa).

It belongs to the YqgF nuclease family.

It localises to the cytoplasm. Its function is as follows. Could be a nuclease involved in processing of the 5'-end of pre-16S rRNA. This Polynucleobacter necessarius subsp. necessarius (strain STIR1) protein is Putative pre-16S rRNA nuclease.